The chain runs to 533 residues: Trigger factor (533 aa).

The region spanning 164-249 (GDQLIIDFTG…VKQVKVETDT (86 aa)) is the PPIase FKBP-type domain. Positions 436–533 (EAAIEAEAEE…APAKKPAAKK (98 aa)) are disordered. Basic residues predominate over residues 465-477 (AAAKKAPAKKAPA). Residues 481-490 (AAKDGDEKPA) show a composition bias toward basic and acidic residues. Composition is skewed to basic residues over residues 494-506 (APAKKAPAKKAST) and 515-533 (PAKKPAAKKAPAKKPAAKK).

Belongs to the FKBP-type PPIase family. Tig subfamily.

The protein resides in the cytoplasm. The catalysed reaction is [protein]-peptidylproline (omega=180) = [protein]-peptidylproline (omega=0). Its function is as follows. Involved in protein export. Acts as a chaperone by maintaining the newly synthesized protein in an open conformation. Functions as a peptidyl-prolyl cis-trans isomerase. The chain is Trigger factor from Erythrobacter litoralis (strain HTCC2594).